The sequence spans 362 residues: Methionine import ATP-binding protein MetN (362 aa).

Residues 23–258 (VRLTDVKRRF…PQAEITGSLL (236 aa)) enclose the ABC transporter domain. Residue 55-62 (GRSGAGKS) coordinates ATP.

This sequence belongs to the ABC transporter superfamily. Methionine importer (TC 3.A.1.24) family. The complex is composed of two ATP-binding proteins (MetN), two transmembrane proteins (MetI) and a solute-binding protein (MetQ).

It localises to the cell inner membrane. The catalysed reaction is L-methionine(out) + ATP + H2O = L-methionine(in) + ADP + phosphate + H(+). It carries out the reaction D-methionine(out) + ATP + H2O = D-methionine(in) + ADP + phosphate + H(+). Part of the ABC transporter complex MetNIQ involved in methionine import. Responsible for energy coupling to the transport system. The chain is Methionine import ATP-binding protein MetN from Rhizobium johnstonii (strain DSM 114642 / LMG 32736 / 3841) (Rhizobium leguminosarum bv. viciae).